Consider the following 109-residue polypeptide: Thioredoxin (109 aa).

The region spanning 2-107 is the Thioredoxin domain; the sequence is SISQVIDTSF…LLNTLQKHLK (106 aa). Active-site nucleophile residues include Cys-31 and Cys-34. Cys-31 and Cys-34 are disulfide-bonded.

This sequence belongs to the thioredoxin family.

It localises to the plastid. The protein localises to the chloroplast. Participates in various redox reactions through the reversible oxidation of its active center dithiol to a disulfide and catalyzes dithiol-disulfide exchange reactions. The protein is Thioredoxin (trxA) of Griffithsia pacifica (Red alga).